Here is a 109-residue protein sequence, read N- to C-terminus: Large ribosomal subunit protein uL22 (109 aa).

It belongs to the universal ribosomal protein uL22 family. In terms of assembly, part of the 50S ribosomal subunit.

Functionally, this protein binds specifically to 23S rRNA; its binding is stimulated by other ribosomal proteins, e.g. L4, L17, and L20. It is important during the early stages of 50S assembly. It makes multiple contacts with different domains of the 23S rRNA in the assembled 50S subunit and ribosome. In terms of biological role, the globular domain of the protein is located near the polypeptide exit tunnel on the outside of the subunit, while an extended beta-hairpin is found that lines the wall of the exit tunnel in the center of the 70S ribosome. The sequence is that of Large ribosomal subunit protein uL22 from Dehalococcoides mccartyi (strain ATCC BAA-2266 / KCTC 15142 / 195) (Dehalococcoides ethenogenes (strain 195)).